The sequence spans 189 residues: ATP synthase subunit b (189 aa).

Residues 7–27 form a helical membrane-spanning segment; that stretch reads LLIAALAVAPLAHAAEGGFVG.

It belongs to the ATPase B chain family. As to quaternary structure, F-type ATPases have 2 components, F(1) - the catalytic core - and F(0) - the membrane proton channel. F(1) has five subunits: alpha(3), beta(3), gamma(1), delta(1), epsilon(1). F(0) has three main subunits: a(1), b(2) and c(10-14). The alpha and beta chains form an alternating ring which encloses part of the gamma chain. F(1) is attached to F(0) by a central stalk formed by the gamma and epsilon chains, while a peripheral stalk is formed by the delta and b chains.

Its subcellular location is the cell inner membrane. Its function is as follows. F(1)F(0) ATP synthase produces ATP from ADP in the presence of a proton or sodium gradient. F-type ATPases consist of two structural domains, F(1) containing the extramembraneous catalytic core and F(0) containing the membrane proton channel, linked together by a central stalk and a peripheral stalk. During catalysis, ATP synthesis in the catalytic domain of F(1) is coupled via a rotary mechanism of the central stalk subunits to proton translocation. Functionally, component of the F(0) channel, it forms part of the peripheral stalk, linking F(1) to F(0). This chain is ATP synthase subunit b, found in Hyphomonas neptunium (strain ATCC 15444).